The primary structure comprises 800 residues: Phenylalanine--tRNA ligase beta subunit (800 aa).

The tRNA-binding domain maps to 39–154; sequence TKDIKNLVVG…ESQVPGTDAL (116 aa). The B5 domain maps to 408-483; sequence AFITPIDITA…RIYGYDDIPS (76 aa). Residues Asp-461, Asp-467, Glu-470, and Glu-471 each coordinate Mg(2+). Residues 708-800 form the FDX-ACB domain; that stretch reads PIFPGMSRDI…ALIEQGAVIR (93 aa).

Belongs to the phenylalanyl-tRNA synthetase beta subunit family. Type 1 subfamily. In terms of assembly, tetramer of two alpha and two beta subunits. Mg(2+) is required as a cofactor.

It is found in the cytoplasm. The enzyme catalyses tRNA(Phe) + L-phenylalanine + ATP = L-phenylalanyl-tRNA(Phe) + AMP + diphosphate + H(+). This Staphylococcus aureus (strain bovine RF122 / ET3-1) protein is Phenylalanine--tRNA ligase beta subunit.